A 397-amino-acid chain; its full sequence is MVDRIDPLDITNIKDLSTWMKTKNWRNIAKLEPCRFKESGRGMRTRKGLKAGQLLVQIPRLLLMTAGDFRTSKEWSWIVDKNLSCHDALVLYLLVEKNKRDSSFFHAYIKTLPEVFSMPTDLRSEMTHMLPNFIAMKLQDKIKSLQDSFKNVARGYKSICIKELGFSDFKWAYYVVNTRAVHITGSSGKFNADSSDCMALAPFLDLLNHTHDTSSISGFNPYTNCYEIETLSKTPKCSEVFINYGPHDNLSLFVEYGFMIPRNPNNFVPFEMTDFISACNEYNVKLSNLCLQTINLHNLMKNLGCFADGPSWSVKVLLKVLSCDWSSLMRIEDIIYRDFENHGLTEKTLLNCILEKKKEELQNSLSTIAKDKNCQIANCIVSFLEECLSIIEFSYAN.

The region spanning 29–245 (AKLEPCRFKE…KCSEVFINYG (217 aa)) is the SET domain. An S-adenosyl-L-methionine-binding site is contributed by Y244.

Belongs to the class V-like SAM-binding methyltransferase superfamily. SETD4 family.

The protein resides in the nucleus. The enzyme catalyses L-lysyl(79)-[histone H3] + 3 S-adenosyl-L-methionine = N(6),N(6),N(6)-trimethyl-L-lysyl(79)-[histone H3] + 3 S-adenosyl-L-homocysteine + 3 H(+). It catalyses the reaction L-lysyl(20)-[histone H4] + S-adenosyl-L-methionine = N(6)-methyl-L-lysyl(20)-[histone H4] + S-adenosyl-L-homocysteine + H(+). It carries out the reaction N(6)-methyl-L-lysyl(20)-[histone H4] + S-adenosyl-L-methionine = N(6),N(6)-dimethyl-L-lysyl(20)-[histone H4] + S-adenosyl-L-homocysteine + H(+). The catalysed reaction is N(6),N(6)-dimethyl-L-lysyl(20)-[histone H4] + S-adenosyl-L-methionine = N(6),N(6),N(6)-trimethyl-L-lysyl(20)-[histone H4] + S-adenosyl-L-homocysteine + H(+). Its function is as follows. Protein-lysine N-methyltransferase involved in the regulation of cell quiescence by catalyzing the trimethylation of 'Lys-20' of histone H4 and 'Lys-79' of histone H3 (H4K20me3 and H3K79me3, respectively) during diapause formation, a state of obligate dormancy. This chain is SET domain-containing protein 4, found in Artemia parthenogenetica (Brine shrimp).